Here is a 316-residue protein sequence, read N- to C-terminus: Coiled-coil domain-containing protein 42 (316 aa).

Coiled coils occupy residues 43–151 (RLLE…EYSI) and 182–236 (HHDL…SDVI).

Belongs to the CFAP73 family. As to quaternary structure, interacts with ODF1 and ODF2. Interacts with CCDC38. Interacts with CCDC146. Interacts with CFAP53.

The protein resides in the cytoplasm. Its subcellular location is the perinuclear region. The protein localises to the cytoskeleton. It localises to the cell projection. It is found in the cilium. The protein resides in the flagellum. Its subcellular location is the microtubule organizing center. The protein localises to the centrosome. Essential for male fertility. Required for sperm development. The sequence is that of Coiled-coil domain-containing protein 42 from Bos taurus (Bovine).